Reading from the N-terminus, the 103-residue chain is Cell division protein FtsB (103 aa).

The Cytoplasmic segment spans residues 1 to 3; the sequence is MGK. The helical transmembrane segment at 4-21 threads the bilayer; that stretch reads LTLLLLAILVWLQYSLWF. Over 22–103 the chain is Periplasmic; it reads GKNGIHDYTR…RAQSAGQNNR (82 aa). Residues 28–71 adopt a coiled-coil conformation; sequence DYTRVNDDVAALQATNAKLKARNDQLFAEIDDLNGGQEALEERA.

The protein belongs to the FtsB family. Part of a complex composed of FtsB, FtsL and FtsQ.

Its subcellular location is the cell inner membrane. Its function is as follows. Essential cell division protein. May link together the upstream cell division proteins, which are predominantly cytoplasmic, with the downstream cell division proteins, which are predominantly periplasmic. This is Cell division protein FtsB from Shigella flexneri serotype 5b (strain 8401).